A 209-amino-acid chain; its full sequence is Outer-membrane lipoprotein carrier protein (209 aa).

The signal sequence occupies residues 1–24 (MTRYVISRLSAIALLALAPALALA).

It belongs to the LolA family. As to quaternary structure, monomer.

It is found in the periplasm. Participates in the translocation of lipoproteins from the inner membrane to the outer membrane. Only forms a complex with a lipoprotein if the residue after the N-terminal Cys is not an aspartate (The Asp acts as a targeting signal to indicate that the lipoprotein should stay in the inner membrane). The chain is Outer-membrane lipoprotein carrier protein from Bordetella avium (strain 197N).